Consider the following 217-residue polypeptide: MRVILLGPPGAGKGTQAVKIAKEFDIPHISTGDIFRQNLRDNTDLGKLAKEYMDKGLLVPDEVTNKIVEDRLEKDDCQKGFLLDGYPRNVAQAEELDRFLHDKGIHLDCVLNIEVDREALIERITGRRVCPNCGATYHIKTSPPAVDNVCDKCGAQLIQRSDDKLESVVKRLEVYESQTKPLIEYYTKKNTLVNIDGNKSVEEVFEDIKKALGDRGK.

ATP is bound at residue glycine 10–threonine 15. The tract at residues serine 30–valine 59 is NMP. Residues threonine 31, arginine 36, leucine 57–valine 59, glycine 85–arginine 88, and glutamine 92 contribute to the AMP site. Residues glycine 126–aspartate 163 are LID. Residue arginine 127 coordinates ATP. 2 residues coordinate Zn(2+): cysteine 130 and cysteine 133. Threonine 136 to tyrosine 137 serves as a coordination point for ATP. Cysteine 150 and cysteine 153 together coordinate Zn(2+). AMP-binding residues include arginine 160 and arginine 171. ATP is bound at residue lysine 199.

Belongs to the adenylate kinase family. As to quaternary structure, monomer.

It is found in the cytoplasm. The enzyme catalyses AMP + ATP = 2 ADP. It participates in purine metabolism; AMP biosynthesis via salvage pathway; AMP from ADP: step 1/1. In terms of biological role, catalyzes the reversible transfer of the terminal phosphate group between ATP and AMP. Plays an important role in cellular energy homeostasis and in adenine nucleotide metabolism. The protein is Adenylate kinase of Thermoanaerobacter pseudethanolicus (strain ATCC 33223 / 39E) (Clostridium thermohydrosulfuricum).